We begin with the raw amino-acid sequence, 640 residues long: Choline O-acetyltransferase (640 aa).

A compositionally biased stretch (basic and acidic residues) spans 1-22; that stretch reads MPDLEKDMQKKEKDSRSKDEPA. The segment at 1–28 is disordered; the sequence is MPDLEKDMQKKEKDSRSKDEPAVPKLPV. Catalysis depends on histidine 334, which acts as the Proton acceptor. Residues 412–424, serine 450, and glutamine 551 contribute to the CoA site; that span reads GKEF…TSPD.

It belongs to the carnitine/choline acetyltransferase family. As to expression, detected in brain and in embryonic retina.

It carries out the reaction choline + acetyl-CoA = acetylcholine + CoA. In terms of biological role, catalyzes the reversible synthesis of acetylcholine (ACh) from acetyl CoA and choline at cholinergic synapses. The sequence is that of Choline O-acetyltransferase (CHAT) from Gallus gallus (Chicken).